The chain runs to 159 residues: Ribosomal RNA large subunit methyltransferase H (159 aa).

S-adenosyl-L-methionine is bound by residues Leu-76, Gly-108, and 127–132; that span reads FGLLTL.

This sequence belongs to the RNA methyltransferase RlmH family. Homodimer.

The protein resides in the cytoplasm. The enzyme catalyses pseudouridine(1915) in 23S rRNA + S-adenosyl-L-methionine = N(3)-methylpseudouridine(1915) in 23S rRNA + S-adenosyl-L-homocysteine + H(+). Its function is as follows. Specifically methylates the pseudouridine at position 1915 (m3Psi1915) in 23S rRNA. This chain is Ribosomal RNA large subunit methyltransferase H, found in Leuconostoc citreum (strain KM20).